The chain runs to 194 residues: PRELI domain containing protein 3B (194 aa).

Residues 1–172 (MKIWTSEHVF…VIHKLNAEIE (172 aa)) enclose the PRELI/MSF1 domain. Phosphoserine is present on residues serine 46 and serine 51.

It belongs to the slowmo family.

This Sus scrofa (Pig) protein is PRELI domain containing protein 3B (PRELID3B).